We begin with the raw amino-acid sequence, 165 residues long: Putative universal stress protein SH1215 (165 aa).

It belongs to the universal stress protein A family.

It localises to the cytoplasm. In Staphylococcus haemolyticus (strain JCSC1435), this protein is Putative universal stress protein SH1215.